Reading from the N-terminus, the 468-residue chain is Membrane-associated tyrosine- and threonine-specific cdc2-inhibitory kinase wee-1.1 (468 aa).

Residues 25–42 show a composition bias toward basic and acidic residues; sequence SKDEPNKLNTSRKLEVTT. A disordered region spans residues 25–63; the sequence is SKDEPNKLNTSRKLEVTTKKNQSNNKKRPPPINKARKSL. The segment covering 49–61 has biased composition (basic residues); that stretch reads NKKRPPPINKARK. In terms of domain architecture, Protein kinase spans 106–357; it reads FNFDKNLGKG…SELMKNHVVK (252 aa). Residues 112-120 and K135 each bind ATP; that span reads LGKGSFGEV. The active-site Proton acceptor is the D224. Mg(2+)-binding residues include N229 and D242. A disordered region spans residues 425–453; sequence EDEYEVFSPPRTPVKKSRYQQTMPEVSPP.

The protein belongs to the protein kinase superfamily. Ser/Thr protein kinase family. WEE1 subfamily. As to expression, in the 12-13-cell embryo, expressed in the E blastomere. In the 16-cell embryo, expressed in the eight AB cells.

It localises to the nucleus. It catalyses the reaction L-seryl-[protein] + ATP = O-phospho-L-seryl-[protein] + ADP + H(+). The catalysed reaction is L-threonyl-[protein] + ATP = O-phospho-L-threonyl-[protein] + ADP + H(+). Acts as a negative regulator of entry into mitosis (G2 to M transition) by phosphorylation of the CDK1 kinase. This is Membrane-associated tyrosine- and threonine-specific cdc2-inhibitory kinase wee-1.1 (wee-1.1) from Caenorhabditis elegans.